We begin with the raw amino-acid sequence, 77 residues long: Conotoxin VnMEKL-023 (77 aa).

The N-terminal stretch at 1 to 19 (MQKLTILLLVAAVLMSTQA) is a signal peptide. Residues 20 to 37 (LIKGGGEKRPKEKIRFLS) constitute a propeptide that is removed on maturation. 3 cysteine pairs are disulfide-bonded: C51–C65, C58–C69, and C64–C74.

This sequence belongs to the conotoxin O2 superfamily. As to expression, expressed by the venom duct.

It localises to the secreted. The polypeptide is Conotoxin VnMEKL-023 (Conus ventricosus (Mediterranean cone)).